A 424-amino-acid chain; its full sequence is Tyrosine--tRNA ligase (424 aa).

L-tyrosine is bound at residue Tyr37. Residues 42–51 (PTADSLHLGH) carry the 'HIGH' region motif. 2 residues coordinate L-tyrosine: Tyr175 and Gln179. Positions 235–239 (KFGKT) match the 'KMSKS' region motif. Lys238 contacts ATP. Residues 357–414 (ADLQQALVAAELVPSRGQARTLISSNAVSVNGEKQASIDYVFDDADRLYSRYTLLRRG) form the S4 RNA-binding domain.

The protein belongs to the class-I aminoacyl-tRNA synthetase family. TyrS type 1 subfamily. As to quaternary structure, homodimer.

The protein resides in the cytoplasm. The enzyme catalyses tRNA(Tyr) + L-tyrosine + ATP = L-tyrosyl-tRNA(Tyr) + AMP + diphosphate + H(+). In terms of biological role, catalyzes the attachment of tyrosine to tRNA(Tyr) in a two-step reaction: tyrosine is first activated by ATP to form Tyr-AMP and then transferred to the acceptor end of tRNA(Tyr). This Sodalis glossinidius (strain morsitans) protein is Tyrosine--tRNA ligase.